Here is a 213-residue protein sequence, read N- to C-terminus: High frequency lysogenization protein HflD homolog (213 aa).

This sequence belongs to the HflD family.

The protein localises to the cytoplasm. It localises to the cell inner membrane. The protein is High frequency lysogenization protein HflD homolog of Klebsiella pneumoniae (strain 342).